We begin with the raw amino-acid sequence, 162 residues long: Epoxidase pydX (162 aa).

The signal sequence occupies residues 1–26; that stretch reads MSLIALPLRLLRLLPAITSTWVLAFA. A run of 2 helical transmembrane segments spans residues 62 to 82 and 89 to 109; these read WILI…LFVG and TGAM…MGYM. N-linked (GlcNAc...) asparagine glycans are attached at residues asparagine 127 and asparagine 139.

It belongs to the epoxidase xenD family.

Its subcellular location is the membrane. Its pathway is mycotoxin biosynthesis. Functionally, epoxidase; part of the gene cluster that mediates the biosynthesis of pyrrocidines, fungal natural products containing a macrocyclic para-cyclophane connected to a decahydrofluorene ring system that show potent antibiotic activities toward Gram-negative bacteria. Within the pathway, pydX functions synergistically with pydB, pydE and pydZ to form the cyclophane. The pathway begins with the PKS-NRPS pydA which, with the help of the trans-enoyl reductase pydC, synthesizes the polyketide-tyrosyl acyl thioester product which can be reductively off-loaded by the terminal reductase (R) domain in pydA. The alpha/beta hydrolase pydG is then required to catalyze the subsequent Knoevenagel condensation that affords the 3-pyrrolin-2-one ring, whereas the four proteins pydB, pydE, pydX and pydZ then function synergistically to form the cyclophane. PydB and the membrane-bound pydX and pydZ are lipid-binding proteins that can sequester and mold the pdyG product into the inverse S-shape. Binding of the medium chain reductase pydE to the complex would trigger the cascade oxidative cyclization. PydY is involved in the Diels-Alder cycloaddition that forms the decahydrofluorene core. Additional non-enzymatic hydroxylation yields pyrrocidine A2 which can be further reduced into pyrrocidine B by an endogenous reductase. The sequence is that of Epoxidase pydX from Acremonium sp.